We begin with the raw amino-acid sequence, 180 residues long: O-acetyl-ADP-ribose deacetylase (180 aa).

The Macro domain maps to 1–175; it reads MSGRINVVQG…LYQRLLGQYD (175 aa). Residues 11 to 12, Asn25, 33 to 35, and 122 to 126 contribute to the substrate site; these read DI, GVD, and STGIY. The active-site Proton acceptor is Asp35.

Belongs to the MacroD-type family. YmdB subfamily. As to quaternary structure, homodimer. Interacts with RNase III.

It carries out the reaction 3''-O-acetyl-ADP-D-ribose + H2O = ADP-D-ribose + acetate + H(+). It catalyses the reaction 2''-O-acetyl-ADP-D-ribose + H2O = ADP-D-ribose + acetate + H(+). Deacetylates O-acetyl-ADP ribose to yield ADP-ribose and free acetate. Down-regulates ribonuclease 3 (RNase III) activity. Acts by interacting directly with the region of the ribonuclease that is required for dimerization/activation. This is O-acetyl-ADP-ribose deacetylase from Cronobacter sakazakii (strain ATCC BAA-894) (Enterobacter sakazakii).